Consider the following 328-residue polypeptide: MTEAVEVRHDWTRSEIEALLDLPLMDLLWRAQGVHRASNPGYHVQLASLLSVKTGGCEEDCAYCPQSMHHSSDVTGQPELQVAPVLERAKAAKQAGADRFCMGWAWREIRDGAPFEAMLQMVSGVRALGMEACVTAGMLTDGQAQRLAKAGLTAYNHNLDTSPEHYDKIITTRTFQERLETLERVRQAGVTLCCGGIIGMGETIGDRASMLQVLASINPHPESVPINALVAVEGTPLEELPPIDPIELVRMIAVTRILMPGSRVRLSAGREQLSKEAQILCLQAGADSIFYGETLLTTGNPAVEADRELLRTAGVQANWLSASEKLAA.

One can recognise a Radical SAM core domain in the interval 42 to 267; that stretch reads YHVQLASLLS…LMPGSRVRLS (226 aa). [4Fe-4S] cluster is bound by residues Cys57, Cys61, and Cys64. 4 residues coordinate [2Fe-2S] cluster: Cys101, Cys133, Cys193, and Arg265.

Belongs to the radical SAM superfamily. Biotin synthase family. As to quaternary structure, homodimer. [4Fe-4S] cluster serves as cofactor. [2Fe-2S] cluster is required as a cofactor.

It carries out the reaction (4R,5S)-dethiobiotin + (sulfur carrier)-SH + 2 reduced [2Fe-2S]-[ferredoxin] + 2 S-adenosyl-L-methionine = (sulfur carrier)-H + biotin + 2 5'-deoxyadenosine + 2 L-methionine + 2 oxidized [2Fe-2S]-[ferredoxin]. The protein operates within cofactor biosynthesis; biotin biosynthesis; biotin from 7,8-diaminononanoate: step 2/2. Functionally, catalyzes the conversion of dethiobiotin (DTB) to biotin by the insertion of a sulfur atom into dethiobiotin via a radical-based mechanism. In Synechococcus sp. (strain CC9311), this protein is Biotin synthase.